A 249-amino-acid polypeptide reads, in one-letter code: Eukaryotic translation initiation factor 3 subunit J-A (249 aa).

Over residues 1 to 15 (MADADSWDADSFEPE) the composition is skewed to acidic residues. The tract at residues 1–104 (MADADSWDAD…DTPLTPEDEL (104 aa)) is disordered. The segment covering 16-27 (EPIKKAAVHDKW) has biased composition (basic and acidic residues). Residues 28–52 (EGEDEDDDVKDNWDDDEEEEKEEEE) are compositionally biased toward acidic residues. Residues 34 to 96 (DDVKDNWDDD…QQLEETKRDT (63 aa)) are a coiled coil. Basic and acidic residues predominate over residues 53–96 (EKKTEAKPTEKKKLSEKIKEKENLQRKKQEELRKQQLEETKRDT).

It belongs to the eIF-3 subunit J family. In terms of assembly, component of the eukaryotic translation initiation factor 3 (eIF-3) complex, which is composed of 13 subunits: eif3a, eif3b, eif3c, eif3d, eif3e, eif3f, eif3g, eif3h, eif3i, eif3j, eif3k, eif3l and eif3m.

It localises to the cytoplasm. Component of the eukaryotic translation initiation factor 3 (eIF-3) complex, which is involved in protein synthesis of a specialized repertoire of mRNAs and, together with other initiation factors, stimulates binding of mRNA and methionyl-tRNAi to the 40S ribosome. The eIF-3 complex specifically targets and initiates translation of a subset of mRNAs involved in cell proliferation. The chain is Eukaryotic translation initiation factor 3 subunit J-A (eif3ja) from Danio rerio (Zebrafish).